Here is a 113-residue protein sequence, read N- to C-terminus: Ribonuclease P protein component (113 aa).

It belongs to the RnpA family. In terms of assembly, consists of a catalytic RNA component (M1 or rnpB) and a protein subunit.

The enzyme catalyses Endonucleolytic cleavage of RNA, removing 5'-extranucleotides from tRNA precursor.. In terms of biological role, RNaseP catalyzes the removal of the 5'-leader sequence from pre-tRNA to produce the mature 5'-terminus. It can also cleave other RNA substrates such as 4.5S RNA. The protein component plays an auxiliary but essential role in vivo by binding to the 5'-leader sequence and broadening the substrate specificity of the ribozyme. This is Ribonuclease P protein component from Ureaplasma parvum serovar 3 (strain ATCC 27815 / 27 / NCTC 11736).